The following is a 230-amino-acid chain: Octanoyltransferase (230 aa).

In terms of domain architecture, BPL/LPL catalytic spans 38–215 (AGGADTLLLL…AVCAALDGVL (178 aa)). Residues 76–83 (RGGKITWH), 145–147 (AIG), and 158–160 (GFA) contribute to the substrate site. Cys176 acts as the Acyl-thioester intermediate in catalysis.

It belongs to the LipB family.

The protein resides in the cytoplasm. The enzyme catalyses octanoyl-[ACP] + L-lysyl-[protein] = N(6)-octanoyl-L-lysyl-[protein] + holo-[ACP] + H(+). It participates in protein modification; protein lipoylation via endogenous pathway; protein N(6)-(lipoyl)lysine from octanoyl-[acyl-carrier-protein]: step 1/2. Its function is as follows. Catalyzes the transfer of endogenously produced octanoic acid from octanoyl-acyl-carrier-protein onto the lipoyl domains of lipoate-dependent enzymes. Lipoyl-ACP can also act as a substrate although octanoyl-ACP is likely to be the physiological substrate. In Mycobacterium tuberculosis (strain ATCC 25177 / H37Ra), this protein is Octanoyltransferase.